The chain runs to 537 residues: Glucose-6-phosphate isomerase (537 aa).

Catalysis depends on Glu341, which acts as the Proton donor. Residues His372 and Lys501 contribute to the active site.

This sequence belongs to the GPI family.

The protein localises to the cytoplasm. It carries out the reaction alpha-D-glucose 6-phosphate = beta-D-fructose 6-phosphate. The protein operates within carbohydrate biosynthesis; gluconeogenesis. Its pathway is carbohydrate degradation; glycolysis; D-glyceraldehyde 3-phosphate and glycerone phosphate from D-glucose: step 2/4. Its function is as follows. Catalyzes the reversible isomerization of glucose-6-phosphate to fructose-6-phosphate. This Jannaschia sp. (strain CCS1) protein is Glucose-6-phosphate isomerase.